The primary structure comprises 72 residues: Thiostrepton (72 aa).

A propeptide spanning residues 1–55 (MDATAIHERWSVMSNASIGQEIGVEGLTGLDVDALEISDYVDETLLDGEDLTVTM) is cleaved from the precursor. The segment at residues 56–67 (IASASCTTCICT) is a cross-link (4-(1-hydroxyethyl)-7-isoleucino-2-(threonin-O3-ylcarbonyl)-7,8-dihydroquinolin-8-ol (Ile-Thr)). Serine 58 carries the 2,3-didehydroalanine (Ser) modification. The segment at residues 60–61 (SC) is a cross-link (thiazole-4-carboxylic acid (Ser-Cys)). A cross-link (5-amino-piperideine-2,5-dicarboxylic acid (Ser-Cys) (with S-69)) is located at residues 60–68 (SCTTCICTC). The 5-amino-piperideine-2,5-dicarboxylic acid (Ser-Ser) (with C-68) cross-link spans 60-69 (SCTTCICTCS). Threonine 63 carries the post-translational modification (Z)-2,3-didehydrobutyrine. The segment at residues 63-64 (TC) is a cross-link ((4S)-thiazoline-4-carboxylic acid (Thr-Cys)). A (3S,4R)-3,4-dihydroxyisoleucine modification is found at isoleucine 65. A cross-link (thiazole-4-carboxylic acid (Ile-Cys)) is located at residues 65-66 (IC). The thiazole-4-carboxylic acid (Thr-Cys) cross-link spans 67–68 (TC). A cross-link (thiazole-4-carboxylic acid (Ser-Cys)) is located at residues 69 to 70 (SC). Residues serine 71 and serine 72 each carry the 2,3-didehydroalanine (Ser) modification. Serine 72 is modified (serine amide).

It belongs to the thiocillin family. Post-translationally, maturation of thiazole and oxazole containing antibiotics involves the enzymatic condensation of a Cys, Ser or Thr with the alpha-carbonyl of the preceding amino acid to form a thioether or ether bond, then dehydration to form a double bond with the alpha-amino nitrogen. Thiazoline or oxazoline ring are dehydrogenated to form thiazole or oxazole rings. Maturation of pyridinyl containing antibiotics involves the cross-linking of a Ser and a Cys-Ser pair usually separated by 7 or 8 residues along the peptide chain. The Ser residues are dehydrated to didehydroalanines, then bonded between their beta carbons. The alpha carbonyl of the Cys condenses with alpha carbon of the first Ser to form a pyridinyl ring. The ring may be multiply dehydrogenated to form a pyridine ring with loss of the amino nitrogen of the first Ser. In terms of processing, the amidation of Ser-72 probably does not occur by the same mechanism, oxidative cleavage of glycine, as in eukaryotes. Post-translationally, the structure of the 2,3-didehydrobutyrin is shown to be Z-isomer.

The protein resides in the secreted. In terms of biological role, has bacteriocidal activity. Inhibits bacterial protein biosynthesis by acting on the elongation factor Tu (EF-Tu). This Streptomyces azureus protein is Thiostrepton (tpdA).